Consider the following 127-residue polypeptide: Histone H2B type 1-A (127 aa).

Positions 1–36 are disordered; sequence MPEVSSKGATISKKGFKKAVVKTQKKEGKKRKRTRK. Position 2 is an N-acetylproline (Pro-2). Lys-7, Lys-13, Lys-14, Lys-17, Lys-18, Lys-22, and Lys-25 each carry N6-acetyllysine; alternate. Lys-7, Lys-13, Lys-14, Lys-17, Lys-18, Lys-22, Lys-25, and Lys-36 each carry N6-crotonyllysine; alternate. N6-lactoyllysine; alternate is present on residues Lys-7 and Lys-13. Residue Lys-7 forms a Glycyl lysine isopeptide (Lys-Gly) (interchain with G-Cter in SUMO2); alternate linkage. Residues Lys-17, Lys-18, Lys-22, and Lys-25 each carry the N6-lactoyllysine; alternate modification. Lys-22 participates in a covalent cross-link: Glycyl lysine isopeptide (Lys-Gly) (interchain with G-Cter in SUMO2); alternate. At Lys-36 the chain carries N6-succinyllysine; alternate. Lys-36 participates in a covalent cross-link: Glycyl lysine isopeptide (Lys-Gly) (interchain with G-Cter in ubiquitin); alternate. Phosphoserine is present on Ser-38. An N6-lactoyllysine; alternate modification is found at Lys-45. Lys-48 bears the N6-methyllysine mark. Lys-59 bears the N6,N6-dimethyllysine mark. Residue Arg-81 is modified to Dimethylated arginine. The residue at position 86 (Ser-86) is a Phosphoserine. Lys-87 is subject to N6-acetyllysine; alternate. Residue Lys-87 is modified to N6-lactoyllysine; alternate. Lys-87 carries the N6,N6,N6-trimethyllysine; alternate modification. 2 positions are modified to omega-N-methylarginine: Arg-88 and Arg-94. Position 110 is an N6-lactoyllysine; alternate (Lys-110). Lys-110 bears the N6-methyllysine mark. The residue at position 117 (Thr-117) is a Phosphothreonine. 2 positions are modified to N6-lactoyllysine; alternate: Lys-118 and Lys-122. Residues Lys-118 and Lys-122 each carry the N6-succinyllysine; alternate modification. Lys-118 is modified (N6-methylated lysine; alternate). Residue Lys-122 forms a Glycyl lysine isopeptide (Lys-Gly) (interchain with G-Cter in ubiquitin); alternate linkage.

It belongs to the histone H2B family. In terms of assembly, the nucleosome is a histone octamer containing two molecules each of H2A, H2B, H3 and H4 assembled in one H3-H4 heterotetramer and two H2A-H2B heterodimers. Monoubiquitination at Lys-36 (H2BK34Ub) by the MSL1/MSL2 dimer is required for histone H3 'Lys-4' (H3K4me) and 'Lys-79' (H3K79me) methylation and transcription activation at specific gene loci, such as HOXA9 and MEIS1 loci. Similarly, monoubiquitination at Lys-122 (H2BK120Ub) by the RNF20/40 complex gives a specific tag for epigenetic transcriptional activation and is also prerequisite for histone H3 'Lys-4' and 'Lys-79' methylation. It also functions cooperatively with the FACT dimer to stimulate elongation by RNA polymerase II. H2BK120Ub also acts as a regulator of mRNA splicing: deubiquitination by USP49 is required for efficient cotranscriptional splicing of a large set of exons. Post-translationally, crotonylation (Kcr) is specifically present in male germ cells and marks testis-specific genes in post-meiotic cells, including X-linked genes that escape sex chromosome inactivation in haploid cells. Crotonylation marks active promoters and enhancers and confers resistance to transcriptional repressors. It is also associated with post-meiotically activated genes on autosomes. In terms of processing, acetylated during spermatogenesis. Acetylated form is most abundant in spermatogonia compared to spermatocytes and round spermatids. Phosphorylated at Thr-117 in spermatogonia, spermatocytes and round spermatids. Post-translationally, methylated at Lys-118 in spermatogonia, spermatocytes and round spermatids. In terms of processing, lactylated in macrophages by EP300/P300 by using lactoyl-CoA directly derived from endogenous or exogenous lactate, leading to stimulates gene transcription. In terms of tissue distribution, mainly expressed in testis, and the corresponding protein is also present in mature sperm (at protein level). Also found in some fat cells.

It is found in the nucleus. The protein resides in the chromosome. Functionally, variant histone specifically required to direct the transformation of dissociating nucleosomes to protamine in male germ cells. Entirely replaces classical histone H2B prior nucleosome to protamine transition and probably acts as a nucleosome dissociating factor that creates a more dynamic chromatin, facilitating the large-scale exchange of histones. Core component of nucleosome. Nucleosomes wrap and compact DNA into chromatin, limiting DNA accessibility to the cellular machineries which require DNA as a template. Histones thereby play a central role in transcription regulation, DNA repair, DNA replication and chromosomal stability. DNA accessibility is regulated via a complex set of post-translational modifications of histones, also called histone code, and nucleosome remodeling. Also found in fat cells, its function and the presence of post-translational modifications specific to such cells are still unclear. This is Histone H2B type 1-A from Homo sapiens (Human).